Here is a 322-residue protein sequence, read N- to C-terminus: Tetrahydromethanopterin S-methyltransferase subunit H (322 aa).

The protein belongs to the MtrH family. As to quaternary structure, the complex is composed of 8 subunits; MtrA, MtrB, MtrC, MtrD, MtrE, MtrF, MtrG and MtrH.

The enzyme catalyses 5-methyl-5,6,7,8-tetrahydromethanopterin + coenzyme M + 2 Na(+)(in) = 5,6,7,8-tetrahydromethanopterin + methyl-coenzyme M + 2 Na(+)(out). It participates in one-carbon metabolism; methanogenesis from CO(2); methyl-coenzyme M from 5,10-methylene-5,6,7,8-tetrahydromethanopterin: step 2/2. Its function is as follows. Part of a complex that catalyzes the formation of methyl-coenzyme M and tetrahydromethanopterin from coenzyme M and methyl-tetrahydromethanopterin. This is an energy-conserving, sodium-ion translocating step. MtrH catalyzes the transfer of the methyl group from methyl-tetrahydromethanopterin to the corrinoid prosthetic group of MtrA. This Methanopyrus kandleri (strain AV19 / DSM 6324 / JCM 9639 / NBRC 100938) protein is Tetrahydromethanopterin S-methyltransferase subunit H.